Consider the following 125-residue polypeptide: Protein Bouncer (125 aa).

The signal sequence occupies residues 1 to 18 (MGCVLLFLLLVCVPVVLP). 5 cysteine pairs are disulfide-bonded: Cys-23–Cys-48, Cys-26–Cys-35, Cys-42–Cys-66, Cys-72–Cys-91, and Cys-92–Cys-97. A UPAR/Ly6 domain is found at 23–98 (CLFCPVTSLN…FSCCGGHYCN (76 aa)). The N-linked (GlcNAc...) asparagine glycan is linked to Asn-32. N-linked (GlcNAc...) asparagine glycosylation occurs at Asn-84. Asn-98 is lipidated: GPI-anchor amidated asparagine. The propeptide at 99 to 125 (SQPRAEPGGRLLLLLLPAAALTAAGAL) is removed in mature form.

Belongs to the SPACA4/bouncer family. Interacts with spermatocyte complex composed of izumo1, spaca6 and tmem81. N-glycosylated. In terms of tissue distribution, highly expressed in oocytes. Not expressed in testis.

It is found in the cell membrane. In terms of biological role, oocyte-expressed fertilization factor that mediates sperm-egg binding and is essential for sperm entry into the egg. Necessary and sufficient to mediate species-specific gamete recognition and fertilization, which is essential for vertebrate species performing external fertilization. External fertilization cannot guarantee that only conspecific sperm reaches the egg by precopulatory mate choice: proteins such as Bouncer can therefore support the selection of conspecific sperm. The protein is Protein Bouncer of Danio rerio (Zebrafish).